Consider the following 542-residue polypeptide: CTP synthase (542 aa).

An amidoligase domain region spans residues 1–265 (MTKYIFVTGG…LKPISKELSL (265 aa)). Residue Ser13 participates in CTP binding. Ser13 contacts UTP. Residues 14–19 (SLGKGI) and Asp71 contribute to the ATP site. Residues Asp71 and Glu139 each contribute to the Mg(2+) site. CTP-binding positions include 146-148 (DIE), 186-191 (KSKPTQ), and Lys222. UTP is bound by residues 186-191 (KSKPTQ) and Lys222. A Glutamine amidotransferase type-1 domain is found at 290 to 541 (VLGFVGKYLE…VEATLAISQE (252 aa)). Residue Gly352 participates in L-glutamine binding. Cys379 functions as the Nucleophile; for glutamine hydrolysis in the catalytic mechanism. L-glutamine contacts are provided by residues 380-383 (LGMQ), Glu403, and Arg471. Active-site residues include His514 and Glu516.

It belongs to the CTP synthase family. Homotetramer.

The enzyme catalyses UTP + L-glutamine + ATP + H2O = CTP + L-glutamate + ADP + phosphate + 2 H(+). It carries out the reaction L-glutamine + H2O = L-glutamate + NH4(+). It catalyses the reaction UTP + NH4(+) + ATP = CTP + ADP + phosphate + 2 H(+). It functions in the pathway pyrimidine metabolism; CTP biosynthesis via de novo pathway; CTP from UDP: step 2/2. Allosterically activated by GTP, when glutamine is the substrate; GTP has no effect on the reaction when ammonia is the substrate. The allosteric effector GTP functions by stabilizing the protein conformation that binds the tetrahedral intermediate(s) formed during glutamine hydrolysis. Inhibited by the product CTP, via allosteric rather than competitive inhibition. Its function is as follows. Catalyzes the ATP-dependent amination of UTP to CTP with either L-glutamine or ammonia as the source of nitrogen. Regulates intracellular CTP levels through interactions with the four ribonucleotide triphosphates. The chain is CTP synthase from Sulfurimonas denitrificans (strain ATCC 33889 / DSM 1251) (Thiomicrospira denitrificans (strain ATCC 33889 / DSM 1251)).